The primary structure comprises 520 residues: Cyclin-L2 (520 aa).

Cyclin-like regions lie at residues 81–183 (ELIQ…RVLK) and 196–280 (KIIV…KILQ). The disordered stretch occupies residues 309–520 (RAKGLLPPGS…DHPGHSRHRR (212 aa)). Residues Ser-330, Ser-337, Ser-347, and Ser-350 each carry the phosphoserine modification. Positions 356–366 (RKMEGPKKAKG) are enriched in basic and acidic residues. Residue Ser-368 is modified to Phosphoserine. Residues 384-422 (RSREQSYSRSPSRSASPKRRKSDSGSTSGGSKSQSRSRS) are RS. A compositionally biased stretch (low complexity) spans 407-429 (SGSTSGGSKSQSRSRSRSDSPPR). Positions 440-453 (SEVRGSRKSKDCKH) are enriched in basic and acidic residues. Positions 454–471 (LTQKPHKSRSRSSSRSRS) are enriched in basic residues. Basic and acidic residues-rich tracts occupy residues 472 to 481 (RSRERTDSSG) and 489 to 514 (YYRD…DHPG).

Belongs to the cyclin family. Cyclin L subfamily. As to quaternary structure, interacts with CDK11A, CDK11B, CDK12, CDK13 and POLR2A, the hyperphosphorylated C-terminal domain (CTD) of RNA polymerase II. May form a ternary complex with CDK11B and casein kinase II (CKII). Interacts with pre-mRNA-splicing factors, including at least SRSF1, SRSF2 and SRSF7/SLU7.

It localises to the nucleus speckle. Its subcellular location is the nucleus. The protein localises to the nucleoplasm. Functionally, involved in pre-mRNA splicing. May induce cell death, possibly by acting on the transcription and RNA processing of apoptosis-related factors. The chain is Cyclin-L2 (Ccnl2) from Rattus norvegicus (Rat).